The sequence spans 277 residues: Orotidine 5'-phosphate decarboxylase (277 aa).

Residues Asp-40, 62-64, 93-102, Tyr-229, and Arg-247 contribute to the substrate site; these read KTH and DRKFIDIGNT. The active-site Proton donor is the Lys-95.

Belongs to the OMP decarboxylase family.

The enzyme catalyses orotidine 5'-phosphate + H(+) = UMP + CO2. The protein operates within pyrimidine metabolism; UMP biosynthesis via de novo pathway; UMP from orotate: step 2/2. This is Orotidine 5'-phosphate decarboxylase (pyrG) from Aspergillus awamori (Black koji mold).